A 158-amino-acid chain; its full sequence is FUN14 domain-containing protein 1 (158 aa).

The YXXL signature appears at 21-24; it reads YEVV. 2 helical membrane-spanning segments follow: residues 51–70 and 77–98; these read YSVT…AGYL and IAAT…SGYV.

Belongs to the FUN14 family.

It is found in the mitochondrion outer membrane. Acts as an activator of hypoxia-induced mitophagy, an important mechanism for mitochondrial quality control. This Tetraodon nigroviridis (Spotted green pufferfish) protein is FUN14 domain-containing protein 1 (fundc1).